The chain runs to 527 residues: Serine/threonine-protein kinase NLK (527 aa).

2 sufficient for interaction with DAPK3 regions span residues 1–125 (MSLC…KAHH) and 124–416 (HHHQ…SKRI). Required for interaction with TAB2 stretches follow at residues 1-304 (MSLC…VVTQ) and 434-527 (YHTC…LVWE). Disordered stretches follow at residues 22–72 (AAAA…SSAA) and 90–139 (QQPY…LDIE). Residues 26–54 (GHHHHHHHHLPHLPPPHLHHHHHPQHHLH) are compositionally biased toward basic residues. A compositionally biased stretch (low complexity) spans 103–119 (PGPAAAAPAQVQAAAAA). Residues 122 to 131 (KAHHHQHSHH) are compositionally biased toward basic residues. The Protein kinase domain maps to 138 to 427 (IEPDRPIGYG…AKDALAHPYL (290 aa)). ATP contacts are provided by residues 144-152 (IGYGAFGVV) and K167. The active-site Proton acceptor is D264. T298 is modified (phosphothreonine; by autocatalysis). The short motif at 298–300 (TQE) is the TQE element. The tract at residues 428–527 (DEGRLRYHTC…EMPPSPLVWE (100 aa)) is required for homodimerization and kinase activation and localization to the nucleus. S522 is subject to Phosphoserine.

Belongs to the protein kinase superfamily. CMGC Ser/Thr protein kinase family. MAP kinase subfamily. In terms of assembly, homodimer. Homodimerization is required for intermolecular autophosphorylation, kinase activation and nuclear localization. Interacts with RNF138/NARF. Interacts with FOXO1 and FOXO3. Interacts with the upstream activating kinases HIPK2 and MAP3K7/TAK1. Interaction with MAP3K7/TAK1 seems to be indirect, and may be mediated by other proteins such as STAT3, TAB1 and TAB2. Interacts with and phosphorylates a number of transcription factors including FOXO4, LEF1, MYB, MYBL1, MYBL2, NOTCH1 and TCF7L2/TCF4. May interact with components of cullin-RING-based SCF (SKP1-CUL1-F-box protein) E3 ubiquitin-protein ligase complexes. Interacts with MEF2A. Interacts with ATF5; the interaction stabilizes ATF5 at the protein level in a kinase-independent manner. It depends on Mg(2+) as a cofactor. Post-translationally, phosphorylated on Thr-298. Intermolecular autophosphorylation on Thr-298 activates the enzyme. In terms of tissue distribution, expressed at high levels in the brain, and at lower levels in heart, kidney, lung and liver.

Its subcellular location is the nucleus. The protein localises to the cytoplasm. It catalyses the reaction L-seryl-[protein] + ATP = O-phospho-L-seryl-[protein] + ADP + H(+). The enzyme catalyses L-threonyl-[protein] + ATP = O-phospho-L-threonyl-[protein] + ADP + H(+). Activated by the non-canonical Wnt signaling pathway, in which WNT5A leads to activation of MAP3K7/TAK1 and HIPK2, which subsequently phosphorylates and activates this protein. Activated by dimerization and subsequent intermolecular autophosphorylation on Thr-298. Other cytokines such as IL6 may also activate this regulatory circuit. In terms of biological role, serine/threonine-protein kinase that regulates a number of transcription factors with key roles in cell fate determination. Positive effector of the non-canonical Wnt signaling pathway, acting downstream of WNT5A, MAP3K7/TAK1 and HIPK2. Negative regulator of the canonical Wnt/beta-catenin signaling pathway. Binds to and phosphorylates TCF7L2/TCF4 and LEF1, promoting the dissociation of the TCF7L2/LEF1/beta-catenin complex from DNA, as well as the ubiquitination and subsequent proteolysis of LEF1. Together these effects inhibit the transcriptional activation of canonical Wnt/beta-catenin target genes. Negative regulator of the Notch signaling pathway. Binds to and phosphorylates NOTCH1, thereby preventing the formation of a transcriptionally active ternary complex of NOTCH1, RBPJ/RBPSUH and MAML1. Negative regulator of the MYB family of transcription factors. Phosphorylation of MYB leads to its subsequent proteolysis while phosphorylation of MYBL1 and MYBL2 inhibits their interaction with the coactivator CREBBP. Other transcription factors may also be inhibited by direct phosphorylation of CREBBP itself. Acts downstream of IL6 and MAP3K7/TAK1 to phosphorylate STAT3, which is in turn required for activation of NLK by MAP3K7/TAK1. Upon IL1B stimulus, cooperates with ATF5 to activate the transactivation activity of C/EBP subfamily members. Phosphorylates ATF5 but also stabilizes ATF5 protein levels in a kinase-independent manner. Acts as an inhibitor of the mTORC1 complex in response to osmotic stress by mediating phosphorylation of RPTOR, thereby preventing recruitment of the mTORC1 complex to lysosomes. This Mus musculus (Mouse) protein is Serine/threonine-protein kinase NLK.